We begin with the raw amino-acid sequence, 162 residues long: Cytochrome c-type biogenesis protein CcmE (162 aa).

Residues 1–7 (MTRKQRR) lie on the Cytoplasmic side of the membrane. Residues 8–28 (LTMIGGALVVLGIAAALVLNA) form a helical; Signal-anchor for type II membrane protein membrane-spanning segment. Topologically, residues 29-162 (LRDSIVFFST…EASSKQEVSQ (134 aa)) are periplasmic. Heme-binding residues include His-122 and Tyr-126. The tract at residues 140–162 (HWKDDYGAQPGAAEASSKQEVSQ) is disordered.

This sequence belongs to the CcmE/CycJ family.

It is found in the cell inner membrane. In terms of biological role, heme chaperone required for the biogenesis of c-type cytochromes. Transiently binds heme delivered by CcmC and transfers the heme to apo-cytochromes in a process facilitated by CcmF and CcmH. In Nitrobacter winogradskyi (strain ATCC 25391 / DSM 10237 / CIP 104748 / NCIMB 11846 / Nb-255), this protein is Cytochrome c-type biogenesis protein CcmE.